Reading from the N-terminus, the 376-residue chain is N-acetyldiaminopimelate deacetylase (376 aa).

Asp-69 is a catalytic residue. The active-site Proton acceptor is the Glu-128.

Belongs to the peptidase M20A family. N-acetyldiaminopimelate deacetylase subfamily.

It carries out the reaction N-acetyl-(2S,6S)-2,6-diaminopimelate + H2O = (2S,6S)-2,6-diaminopimelate + acetate. The protein operates within amino-acid biosynthesis; L-lysine biosynthesis via DAP pathway; LL-2,6-diaminopimelate from (S)-tetrahydrodipicolinate (acetylase route): step 3/3. In terms of biological role, catalyzes the conversion of N-acetyl-diaminopimelate to diaminopimelate and acetate. In Bacillus thuringiensis subsp. konkukian (strain 97-27), this protein is N-acetyldiaminopimelate deacetylase.